The chain runs to 151 residues: Deoxyuridine 5'-triphosphate nucleotidohydrolase (151 aa).

Substrate is bound by residues 70–72 (RSG), Asn-83, 87–89 (LID), and Met-97.

The protein belongs to the dUTPase family. Mg(2+) serves as cofactor.

The catalysed reaction is dUTP + H2O = dUMP + diphosphate + H(+). Its pathway is pyrimidine metabolism; dUMP biosynthesis; dUMP from dCTP (dUTP route): step 2/2. This enzyme is involved in nucleotide metabolism: it produces dUMP, the immediate precursor of thymidine nucleotides and it decreases the intracellular concentration of dUTP so that uracil cannot be incorporated into DNA. This is Deoxyuridine 5'-triphosphate nucleotidohydrolase from Sodalis glossinidius (strain morsitans).